We begin with the raw amino-acid sequence, 604 residues long: Acetylcholinesterase 4 (604 aa).

The signal sequence occupies residues 1-23 (MKPKLVFLPFLIFITVFIEESEA). Cys88 and Cys115 form a disulfide bridge. N-linked (GlcNAc...) asparagine glycans are attached at residues Asn96 and Asn128. Ser219 acts as the Acyl-ester intermediate in catalysis. Cys273 and Cys284 are disulfide-bonded. Asn274 and Asn299 each carry an N-linked (GlcNAc...) asparagine glycan. Catalysis depends on Glu347, which acts as the Charge relay system. N-linked (GlcNAc...) asparagine glycosylation is found at Asn400 and Asn446. A disulfide bond links Cys426 and Cys561. His477 functions as the Charge relay system in the catalytic mechanism.

This sequence belongs to the type-B carboxylesterase/lipase family.

Its subcellular location is the synapse. It is found in the secreted. The protein localises to the cell membrane. The catalysed reaction is acetylcholine + H2O = choline + acetate + H(+). In terms of biological role, rapidly hydrolyzes choline released into the synapse. The chain is Acetylcholinesterase 4 (ace-4) from Caenorhabditis briggsae.